A 342-amino-acid chain; its full sequence is Thiosulfate/3-mercaptopyruvate sulfurtransferase 2 (342 aa).

Rhodanese domains follow at residues 56–173 (GDAD…DVES) and 224–338 (EDKT…LPIV). Cys-298 acts as the Cysteine persulfide intermediate in catalysis.

Expressed in roots, rosette and cauline leaves, stems, flowers and siliques.

It localises to the cytoplasm. It carries out the reaction thiosulfate + hydrogen cyanide = thiocyanate + sulfite + 2 H(+). The enzyme catalyses 2-oxo-3-sulfanylpropanoate + [thioredoxin]-dithiol = [thioredoxin]-disulfide + hydrogen sulfide + pyruvate + H(+). In terms of biological role, catalyzes the transfer of a sulfur ion from a donor to cyanide or to other thiol compounds. Substrate preference is 3-mercaptopyruvate &gt; thiosulfate. Involved in embryo and seed development. The sequence is that of Thiosulfate/3-mercaptopyruvate sulfurtransferase 2 (STR2) from Arabidopsis thaliana (Mouse-ear cress).